The following is a 363-amino-acid chain: tRNA (guanine(26)-N(2))-dimethyltransferase (363 aa).

In terms of domain architecture, Trm1 methyltransferase spans 5-352 (VLRREGGVKF…GEYGEVLMAF (348 aa)). S-adenosyl-L-methionine-binding residues include arginine 40, arginine 67, aspartate 85, aspartate 111, and alanine 112.

The protein belongs to the class I-like SAM-binding methyltransferase superfamily. Trm1 family.

It catalyses the reaction guanosine(26) in tRNA + 2 S-adenosyl-L-methionine = N(2)-dimethylguanosine(26) in tRNA + 2 S-adenosyl-L-homocysteine + 2 H(+). Its function is as follows. Dimethylates a single guanine residue at position 26 of a number of tRNAs using S-adenosyl-L-methionine as donor of the methyl groups. In Pyrobaculum aerophilum (strain ATCC 51768 / DSM 7523 / JCM 9630 / CIP 104966 / NBRC 100827 / IM2), this protein is tRNA (guanine(26)-N(2))-dimethyltransferase.